Here is a 413-residue protein sequence, read N- to C-terminus: Isobutyryl-CoA dehydrogenase, mitochondrial (413 aa).

The transit peptide at 1–20 (MAMLRSGYRRFGCLRAALKS) directs the protein to the mitochondrion. At Lys-48 the chain carries N6-acetyllysine; alternate. Lys-48 is modified (N6-succinyllysine; alternate). Residues 156–165 (YCLTEPGSGS) and 189–191 (FIS) contribute to the FAD site. Residue Ser-165 participates in substrate binding. Position 211 is an N6-succinyllysine (Lys-211). Lys-229 carries the post-translational modification N6-acetyllysine. Residue Lys-269 is modified to N6-succinyllysine. 272 to 275 (NGGR) contacts substrate. Residues Arg-300, 310-311 (SQ), and 369-373 (QMHGG) each bind FAD. Catalysis depends on Glu-396, which acts as the Proton acceptor. Position 398-400 (398-400 (SNE)) interacts with FAD. Substrate is bound at residue Arg-408.

Belongs to the acyl-CoA dehydrogenase family. Homotetramer, formed by a dimer of dimers. FAD is required as a cofactor.

It localises to the mitochondrion. The enzyme catalyses 2-methylpropanoyl-CoA + oxidized [electron-transfer flavoprotein] + H(+) = 2-methylpropenoyl-CoA + reduced [electron-transfer flavoprotein]. The catalysed reaction is (2S)-2-methylbutanoyl-CoA + oxidized [electron-transfer flavoprotein] + H(+) = (2E)-2-methylbut-2-enoyl-CoA + reduced [electron-transfer flavoprotein]. It carries out the reaction propanoyl-CoA + oxidized [electron-transfer flavoprotein] + H(+) = acryloyl-CoA + reduced [electron-transfer flavoprotein]. It participates in amino-acid degradation; L-valine degradation. Its function is as follows. Isobutyryl-CoA dehydrogenase which catalyzes the conversion of 2-methylpropanoyl-CoA to (2E)-2-methylpropenoyl-CoA in the valine catabolic pathway. To a lesser extent, also able to catalyze the oxidation of (2S)-2-methylbutanoyl-CoA. This is Isobutyryl-CoA dehydrogenase, mitochondrial from Mus musculus (Mouse).